Consider the following 257-residue polypeptide: Tryptophan synthase alpha chain (257 aa).

Catalysis depends on proton acceptor residues Glu46 and Asp57.

It belongs to the TrpA family. In terms of assembly, tetramer of two alpha and two beta chains.

It catalyses the reaction (1S,2R)-1-C-(indol-3-yl)glycerol 3-phosphate + L-serine = D-glyceraldehyde 3-phosphate + L-tryptophan + H2O. Its pathway is amino-acid biosynthesis; L-tryptophan biosynthesis; L-tryptophan from chorismate: step 5/5. In terms of biological role, the alpha subunit is responsible for the aldol cleavage of indoleglycerol phosphate to indole and glyceraldehyde 3-phosphate. This Parabacteroides distasonis (strain ATCC 8503 / DSM 20701 / CIP 104284 / JCM 5825 / NCTC 11152) protein is Tryptophan synthase alpha chain.